Consider the following 280-residue polypeptide: MSALNLTVRVHPVVLFQVVDAFERRNADSHRVIGTLLGSVDKGVVEVTNCFCVPHKEHDDQVEAELSYALDMYDLNRKVNANESVVGWWATGNEVTNHSSVIHEYYARECNNPVHLTVDTSLQGGRMGLRAYVCIQLGVPGGKTGCMFTPIPVELTSYEPETFGLKLLQKTVGVSPAHRPKTVPPMLDLAQISEASTKLQSLLELILKYVDDVIAHKVTPDNAVGRQLLDLIHSVPHMTHEQFTQMFNANVRDLLMVITLSQLIKTQLQLNEKLTFLPTA.

The MPN domain maps to Val-8–Gly-138.

Belongs to the eIF-3 subunit F family. Component of the eukaryotic translation initiation factor 3 (eIF-3) complex. The eIF-3 complex interacts with pix.

It is found in the cytoplasm. Functionally, component of the eukaryotic translation initiation factor 3 (eIF-3) complex, which is involved in protein synthesis of a specialized repertoire of mRNAs and, together with other initiation factors, stimulates binding of mRNA and methionyl-tRNAi to the 40S ribosome. The eIF-3 complex specifically targets and initiates translation of a subset of mRNAs involved in cell proliferation. This chain is Eukaryotic translation initiation factor 3 subunit F-1, found in Drosophila virilis (Fruit fly).